Reading from the N-terminus, the 230-residue chain is Orotidine 5'-phosphate decarboxylase (230 aa).

Residues aspartate 11, lysine 34, 61–70 (DLKLHDIPNT), threonine 117, arginine 179, glutamine 188, glycine 208, and arginine 209 each bind substrate. Lysine 63 acts as the Proton donor in catalysis.

This sequence belongs to the OMP decarboxylase family. Type 1 subfamily. In terms of assembly, homodimer.

The enzyme catalyses orotidine 5'-phosphate + H(+) = UMP + CO2. It functions in the pathway pyrimidine metabolism; UMP biosynthesis via de novo pathway; UMP from orotate: step 2/2. Catalyzes the decarboxylation of orotidine 5'-monophosphate (OMP) to uridine 5'-monophosphate (UMP). This Streptococcus pyogenes serotype M1 protein is Orotidine 5'-phosphate decarboxylase.